The chain runs to 252 residues: MVTNVGEQLKKQPVLRGGGFTFKQFFVAHDRCAMKVGTDGVLLGAWVPVLHARRVLDIGCGSGLIALMIAQRSLPQVQIDGVELEPAAAQQASSNVELSPWAERIHIHQQDIHQFAENHPHQYDLIVSNPPYFAPAIACRDEARDTARYTGSLTHDTLLNCAEKLITEDGMFCVVLPHELGIEFARLAGQQGWFVRCQVDIRDRPGKPLHRMLLTLSRQAGETVYQHLALRQSEGVYSPEFCQLISDFYLNY.

The protein belongs to the methyltransferase superfamily. tRNA (adenine-N(6)-)-methyltransferase family.

Its subcellular location is the cytoplasm. It carries out the reaction adenosine(37) in tRNA1(Val) + S-adenosyl-L-methionine = N(6)-methyladenosine(37) in tRNA1(Val) + S-adenosyl-L-homocysteine + H(+). Functionally, specifically methylates the adenine in position 37 of tRNA(1)(Val) (anticodon cmo5UAC). The chain is tRNA1(Val) (adenine(37)-N6)-methyltransferase from Yersinia pseudotuberculosis serotype O:3 (strain YPIII).